An 879-amino-acid polypeptide reads, in one-letter code: Protein translocase subunit SecA (879 aa).

ATP is bound by residues Gln87, 105–109, and Asp509; that span reads GEGKT. Residues 834 to 879 form a disordered region; it reads IAEDSEKLKPITGTKKPKRNDPCPCGSGKKYKNCCGQSGPKKGLLA. Zn(2+) contacts are provided by Cys856, Cys858, Cys867, and Cys868.

It belongs to the SecA family. In terms of assembly, monomer and homodimer. Part of the essential Sec protein translocation apparatus which comprises SecA, SecYEG and auxiliary proteins SecDF-YajC and YidC. Zn(2+) is required as a cofactor.

Its subcellular location is the cell inner membrane. It is found in the cytoplasm. The enzyme catalyses ATP + H2O + cellular proteinSide 1 = ADP + phosphate + cellular proteinSide 2.. Its function is as follows. Part of the Sec protein translocase complex. Interacts with the SecYEG preprotein conducting channel. Has a central role in coupling the hydrolysis of ATP to the transfer of proteins into and across the cell membrane, serving as an ATP-driven molecular motor driving the stepwise translocation of polypeptide chains across the membrane. The sequence is that of Protein translocase subunit SecA from Sulfurovum sp. (strain NBC37-1).